The following is a 410-amino-acid chain: MDRVELCNAILFGELDVARRLLDSYINPNFTINGYSPIKMAVRLRDVEMIKLLMSYNTYPDYNYPDIESELHEAVEEGDVVKVEELLDSGKFINDVIYKKGNTPLHLATISKNLDMMRLLIARGADTDVPNTDRFTPLHLAVMSKDIKGIELLLDHRACTNIEDCYGCTPLIIAMSKGDTEVCRMLLDSGANIDYFSKRPCVTAMCYAIQNNKIDMVSMFLKRGADSNIVFTVMNEEHTTLEMICNMDTNPESESVDMLIADIALRQYTNTISSDKGFSRNMTVINSKSRLKDVFEKCKIELRRINSESIRTYNILDLCLKPSKNLDENILARHSRKILGLYDNAIFYKYLLKELADTASQRAEAIESAMRVIDEKITGDETKWNWLPHEIKYNILEYIGNKELDIASMK.

ANK repeat units lie at residues 33–62 (NGYS…YPDY), 66–95 (DIES…FIND), 100–129 (KGNT…DTDV), 133–162 (DRFT…CTNI), 166–195 (YGCT…NIDY), and 200–229 (PCVT…DSNI).

The protein is Putative ankyrin repeat protein FPV240 of Vertebrata (FPV).